A 214-amino-acid chain; its full sequence is MKLPPLMPAIFVKRLNRFVGKVFLNGKIERALIRNTGRLSELLKFGNTVFVREKEGGKYRYEIILARAEKSLVCVESHYANKIFEEYIRRNWKFKELKREVKLENERFDFLIDNTLVEVKSVNLVKNGVAMFPDAPTKRGTGHIRTLIKLSDKFKPLLVFVVQRSDFLSFEPNCETDPEFCKAYYEYVSKGFEVLVLKCRVSLEEINVVEVFFT.

This sequence belongs to the SfsA family.

The chain is Sugar fermentation stimulation protein homolog from Aquifex aeolicus (strain VF5).